The following is a 312-amino-acid chain: R2-like ligand binding oxidase (312 aa).

Positions 68, 101, and 104 each coordinate Mn(2+). The segment at residues 71 to 162 is a cross-link (3-(O4'-tyrosyl)-valine (Val-Tyr)); that stretch reads VTQDIQPFMA…QAQVRASVTY (92 aa). Residue glutamate 101 participates in Fe cation binding. Fe cation is bound by residues glutamate 167, glutamate 202, and histidine 205.

This sequence belongs to the ribonucleoside diphosphate reductase small chain family. R2-like ligand binding oxidase subfamily. In terms of assembly, homodimer. It depends on Fe cation as a cofactor. Requires Mn(2+) as cofactor.

Functionally, probable oxidase that might be involved in lipid metabolism. The chain is R2-like ligand binding oxidase from Mycolicibacterium gilvum (strain PYR-GCK) (Mycobacterium gilvum (strain PYR-GCK)).